The following is a 229-amino-acid chain: 2,3-bisphosphoglycerate-dependent phosphoglycerate mutase (229 aa).

Substrate is bound by residues 7–14 (RHGQSEWN), 20–21 (TG), Arg59, 86–89 (ERHY), Lys97, 113–114 (RR), and 182–183 (GN). His8 functions as the Tele-phosphohistidine intermediate in the catalytic mechanism. Glu86 (proton donor/acceptor) is an active-site residue.

The protein belongs to the phosphoglycerate mutase family. BPG-dependent PGAM subfamily.

The enzyme catalyses (2R)-2-phosphoglycerate = (2R)-3-phosphoglycerate. It functions in the pathway carbohydrate degradation; glycolysis; pyruvate from D-glyceraldehyde 3-phosphate: step 3/5. Catalyzes the interconversion of 2-phosphoglycerate and 3-phosphoglycerate. The chain is 2,3-bisphosphoglycerate-dependent phosphoglycerate mutase from Listeria monocytogenes serotype 4a (strain HCC23).